A 130-amino-acid chain; its full sequence is Small ribosomal subunit protein uS8 (130 aa).

It belongs to the universal ribosomal protein uS8 family. Part of the 30S ribosomal subunit. Contacts proteins S5 and S12.

In terms of biological role, one of the primary rRNA binding proteins, it binds directly to 16S rRNA central domain where it helps coordinate assembly of the platform of the 30S subunit. This chain is Small ribosomal subunit protein uS8, found in Alcanivorax borkumensis (strain ATCC 700651 / DSM 11573 / NCIMB 13689 / SK2).